A 284-amino-acid polypeptide reads, in one-letter code: 3-methyl-2-oxobutanoate hydroxymethyltransferase 2 (284 aa).

Mg(2+) contacts are provided by Asp49 and Asp88. 3-methyl-2-oxobutanoate contacts are provided by residues 49–50 (DS), Asp88, and Lys118. A Mg(2+)-binding site is contributed by Glu120. The active-site Proton acceptor is the Glu187.

It belongs to the PanB family. In terms of assembly, homodecamer; pentamer of dimers. Requires Mg(2+) as cofactor.

The protein resides in the cytoplasm. It catalyses the reaction 3-methyl-2-oxobutanoate + (6R)-5,10-methylene-5,6,7,8-tetrahydrofolate + H2O = 2-dehydropantoate + (6S)-5,6,7,8-tetrahydrofolate. It participates in cofactor biosynthesis; (R)-pantothenate biosynthesis; (R)-pantoate from 3-methyl-2-oxobutanoate: step 1/2. Its function is as follows. Catalyzes the reversible reaction in which hydroxymethyl group from 5,10-methylenetetrahydrofolate is transferred onto alpha-ketoisovalerate to form ketopantoate. The polypeptide is 3-methyl-2-oxobutanoate hydroxymethyltransferase 2 (Burkholderia cenocepacia (strain HI2424)).